A 360-amino-acid chain; its full sequence is Dihydroorotate dehydrogenase (quinone) (360 aa).

FMN-binding positions include 67-71 (AGLDK) and threonine 91. Lysine 71 serves as a coordination point for substrate. Position 116–120 (116–120 (NRMGF)) interacts with substrate. Positions 145 and 176 each coordinate FMN. Asparagine 176 is a substrate binding site. Serine 179 (nucleophile) is an active-site residue. Residue asparagine 181 participates in substrate binding. FMN-binding residues include lysine 222 and serine 250. 251–252 (NT) is a substrate binding site. Residues glycine 272, glycine 301, and 322 to 323 (YS) each bind FMN.

It belongs to the dihydroorotate dehydrogenase family. Type 2 subfamily. Monomer. It depends on FMN as a cofactor.

It localises to the cell membrane. The catalysed reaction is (S)-dihydroorotate + a quinone = orotate + a quinol. It participates in pyrimidine metabolism; UMP biosynthesis via de novo pathway; orotate from (S)-dihydroorotate (quinone route): step 1/1. Catalyzes the conversion of dihydroorotate to orotate with quinone as electron acceptor. The polypeptide is Dihydroorotate dehydrogenase (quinone) (Deinococcus deserti (strain DSM 17065 / CIP 109153 / LMG 22923 / VCD115)).